Here is a 489-residue protein sequence, read N- to C-terminus: Lysine--tRNA ligase (489 aa).

Mg(2+)-binding residues include glutamate 398 and glutamate 405.

The protein belongs to the class-II aminoacyl-tRNA synthetase family. Homodimer. Mg(2+) is required as a cofactor.

It is found in the cytoplasm. The enzyme catalyses tRNA(Lys) + L-lysine + ATP = L-lysyl-tRNA(Lys) + AMP + diphosphate. The sequence is that of Lysine--tRNA ligase from Moorella thermoacetica (strain ATCC 39073 / JCM 9320).